A 1182-amino-acid polypeptide reads, in one-letter code: NACHT, LRR and PYD domains-containing protein 1a (1182 aa).

The tract at residues 1-23 is disordered; sequence MEESQSKQESSTKVAQHEGQEDV. The NACHT domain occupies 133–442; it reads QLVIIEGAAG…EFFAAMSYIL (310 aa). 139–146 contributes to the ATP binding site; the sequence is GAAGIGKS. LRR repeat units follow at residues 634 to 655, 691 to 711, and 720 to 743; these read NLEE…SLCT, SLTE…KMLC, and NLSI…RTLE. The tract at residues 780–806 is disordered; sequence QQRQQSGDKHMEPLGTEDEFWGPTGPV. The interval 799-932 is ZU5; the sequence is FWGPTGPVTT…HYAVLENPSF (134 aa). Residues 799 to 1082 form the FIIND domain; that stretch reads FWGPTGPVTT…LRPALPKIAT (284 aa). Positions 933-1082 are UPA; sequence SPMGILLRMI…LRPALPKIAT (150 aa). The 84-residue stretch at 1092–1175 folds into the CARD domain; the sequence is HFMDQHREQL…HLVMDILEKL (84 aa).

The protein belongs to the NLRP family. Interacts (via LRR repeats) with BCL2 and BCL2L1 (via the loop between motifs BH4 and BH3). Interacts with NOD2; this interaction is enhanced in the presence of muramyl dipeptide (MDP) and increases IL1B release. Interacts with EIF2AK2/PKR; this interaction requires EIF2AK2 activity, is accompanied by EIF2AK2 autophosphorylation and promotes inflammasome assembly in response to danger-associated signals. Interacts with MEFV; this interaction targets Nlrp1a to degradation by autophagy, hence preventing excessive IL1B- and IL18-mediated inflammation. Interacts with DPP9; leading to inhibit activation of the inflammasome. DPP9 acts via formation of a ternary complex, composed of a DPP9 homodimer, one full-length Nlrp1a protein, and one cleaved C-terminus of Nlrp1a (NACHT, LRR and PYD domains-containing protein 1a, C-terminus). Interacts with DPP8; leading to inhibit activation of the inflammasome, probably via formation of a ternary complex with DPP8. As to quaternary structure, interacts with the C-terminal part of Nlrp1a (NACHT, LRR and PYD domains-containing protein 1a, C-terminus) in absence of pathogens and other damage-associated signals. In terms of assembly, interacts with the N-terminal part of Nlrp1a (NACHT, LRR and PYD domains-containing protein 1a, N-terminus) in absence of pathogens and other damage-associated signals. Homomultimer; forms the Nlrp1a inflammasome polymeric complex, a filament composed of homopolymers of this form in response to pathogens and other damage-associated signals. Interacts (via CARD domain) with CASP1 (via CARD domain); leading to CASP1 activation. Autocatalytically cleaved. Autocatalytic cleavage in FIIND region occurs constitutively, prior to activation signals, and is required for inflammasome activity (IL1B release), possibly by facilitating CASP1 binding. Both N- and C-terminal parts remain associated non-covalently. Post-translationally, ubiquitinated in response to pathogen-associated signals, leading to its degradation by the proteasome and subsequent release of the cleaved C-terminal part of the protein (NACHT, LRR and PYD domains-containing protein 1a, C-terminus), which polymerizes and forms the Nlrp1a inflammasome. Highly expressed in hematopoietic stem cells and progenitor cells of both myeloid and lymphoid origin. The expression is highly strain-dependent. Not expressed in Balb/cJ animals, but widely expressed in C57BL/6J. Expressed in macrophages resistant to Bacillus anthracis lethal toxin, but not in toxin-sensitive macrophages, except in CAST/EiJ strain.

The protein localises to the cytoplasm. The protein resides in the cytosol. It is found in the nucleus. It localises to the inflammasome. Nlrp1a inflammasome is activated by pathogens and other damage-associated signals: activation promotes ubiquitination and degradation of the N-terminal part, releasing the cleaved C-terminal part of the protein (NACHT, LRR and PYD domains-containing protein 1a, C-terminus), which polymerizes and forms the Nlrp1a inflammasome. Nlrp1a inflammasome is inhibited by DPP8 and DPP9, which sequester the C-terminal fragment of Nlrp1a (NACHT, LRR and PYD domains-containing protein 1a, C-terminus) in a ternary complex, thereby preventing Nlrp1a oligomerization and activation. Nlrp1a inflammasome is activated by Val-boroPro (Talabostat, PT-100), an inhibitor of dipeptidyl peptidases DPP8 and DPP9. Val-boroPro relieves inhibition of DPP8 and/or DPP9 by promoting disruption of the ternary complex, releasing its C-terminal part from autoinhibition. Acts as the sensor component of the Nlrp1a inflammasome, which mediates inflammasome activation in response to various pathogen-associated signals, leading to subsequent pyroptosis. Inflammasomes are supramolecular complexes that assemble in the cytosol in response to pathogens and other damage-associated signals and play critical roles in innate immunity and inflammation. Acts as a recognition receptor (PRR): recognizes specific pathogens and other damage-associated signals, and mediates the formation of the inflammasome polymeric complex. In response to pathogen-associated signals, the N-terminal part of Nlrp1a is degraded by the proteasome, releasing the cleaved C-terminal part of the protein (NACHT, LRR and PYD domains-containing protein 1a, C-terminus), which polymerizes to initiate the formation of the inflammasome complex: the inflammasome recruits pro-caspase-1 (proCASP1) and promotes caspase-1 (CASP1) activation, which subsequently cleaves and activates inflammatory cytokines IL1B and IL18 and gasdermin-D (GSDMD), leading to pyroptosis. In the absence of GSDMD expression, the Nlrp1a inflammasome is able to recruit and activate CASP8, leading to activation of gasdermin-E (GSDME). Activation of Nlrp1a inflammasome is also required for HMGB1 secretion; the active cytokines and HMGB1 stimulate inflammatory responses. When activated in the bone marrow, induces the pyroptosis of hematopoietic stem cells and progenitor cells of both myeloid and lymphoid lineages, hence allowing the removal of damaged cells, and the release of IL1B, which induces granulopoiesis. Functionally, constitutes the precursor of the Nlrp1a inflammasome, which mediates autoproteolytic processing within the FIIND domain to generate the N-terminal and C-terminal parts, which are associated non-covalently in absence of pathogens and other damage-associated signals. Its function is as follows. Regulatory part that prevents formation of the Nlrp1a inflammasome: in absence of pathogens and other damage-associated signals, interacts with the C-terminal part of Nlrp1a (NACHT, LRR and PYD domains-containing protein 1a, C-terminus), preventing activation of the Nlrp1a inflammasome. In response to pathogen-associated signals, this part is ubiquitinated and degraded by the proteasome, releasing the cleaved C-terminal part of the protein, which polymerizes and forms the Nlrp1a inflammasome. In terms of biological role, constitutes the active part of the Nlrp1a inflammasome. In absence of pathogens and other damage-associated signals, interacts with the N-terminal part of Nlrp1a (NACHT, LRR and PYD domains-containing protein 1a, N-terminus), preventing activation of the Nlrp1a inflammasome. In response to pathogen-associated signals, the N-terminal part of Nlrp1a is degraded by the proteasome, releasing this form, which polymerizes to form the Nlrp1a inflammasome complex: the Nlrp1a inflammasome complex then directly recruits pro-caspase-1 (proCASP1) and promotes caspase-1 (CASP1) activation, leading to gasdermin-D (GSDMD) cleavage and subsequent pyroptosis. This is NACHT, LRR and PYD domains-containing protein 1a from Mus musculus (Mouse).